Here is a 578-residue protein sequence, read N- to C-terminus: MEKQKLIKLIDVAAGRKKADLVLKNAKIVDVFQAKILTGDIAISDGYIAGIGGSYQGVVECNYTGKYVAPGFIEAHIHIESSYVSPEEFSRVFIPRGTTTILADPHEIVNVAGLKGLDYMVNAAKNAKMDIRYMMPPCVPATNFETSGADLYADDMEDALKTGEVDGLAELMNFPGVINADDKMIDEILMAKKYGARIDGHAPQVVGKDLNAYIAAGPANDHECSTLEEAEERLARGMYLLLREGSVTQDLRKLLPIVNTANSRRCLLSGDDVQAKTAINKGHLDNSIRICIDEGLNPITAIQMATLNPAEYCGLNDRGAIAPGRRADMVVFESLEDFAVEETYILGEKLSQGNEYLGEVNYYPIDSVESSMHVKDFTREKLQLHLNSDKVRAIGVVPGEVLTTEEHVTVKRDGDGNFVYNDQEDVTKIVVVERHHNTGNVNVNLLSGYGIKAGAIAISIGHDSHNIIATGTNDDDIFMAVNELIKQEGGAVVVKDEKVISRMELKIAGLMCNLPAEKMIAQQDALDEAVHEELGVPDNVNPVMTLSFMPLAVIPKLKITDKGLVDVEKNAFVSNELD.

The protein belongs to the metallo-dependent hydrolases superfamily. Adenine deaminase family. It depends on Mn(2+) as a cofactor.

The enzyme catalyses adenine + H2O + H(+) = hypoxanthine + NH4(+). This chain is Adenine deaminase, found in Ligilactobacillus salivarius (strain UCC118) (Lactobacillus salivarius).